We begin with the raw amino-acid sequence, 434 residues long: Enolase (434 aa).

(2R)-2-phosphoglycerate is bound at residue Gln-167. Glu-209 serves as the catalytic Proton donor. Residues Asp-246, Glu-291, and Asp-318 each coordinate Mg(2+). (2R)-2-phosphoglycerate-binding residues include Lys-343, Arg-372, Ser-373, and Lys-394. Lys-343 (proton acceptor) is an active-site residue.

This sequence belongs to the enolase family. Component of the RNA degradosome, a multiprotein complex involved in RNA processing and mRNA degradation. The cofactor is Mg(2+).

The protein resides in the cytoplasm. It is found in the secreted. It localises to the cell surface. It catalyses the reaction (2R)-2-phosphoglycerate = phosphoenolpyruvate + H2O. The protein operates within carbohydrate degradation; glycolysis; pyruvate from D-glyceraldehyde 3-phosphate: step 4/5. Catalyzes the reversible conversion of 2-phosphoglycerate (2-PG) into phosphoenolpyruvate (PEP). It is essential for the degradation of carbohydrates via glycolysis. This chain is Enolase, found in Buchnera aphidicola subsp. Acyrthosiphon pisum (strain APS) (Acyrthosiphon pisum symbiotic bacterium).